A 1384-amino-acid chain; its full sequence is DNA-directed RNA polymerase subunit beta'' (1384 aa).

Residues cysteine 224, cysteine 297, cysteine 304, and cysteine 307 each coordinate Zn(2+).

It belongs to the RNA polymerase beta' chain family. RpoC2 subfamily. In terms of assembly, in plastids the minimal PEP RNA polymerase catalytic core is composed of four subunits: alpha, beta, beta', and beta''. When a (nuclear-encoded) sigma factor is associated with the core the holoenzyme is formed, which can initiate transcription. Zn(2+) is required as a cofactor.

The protein localises to the plastid. The protein resides in the chloroplast. It carries out the reaction RNA(n) + a ribonucleoside 5'-triphosphate = RNA(n+1) + diphosphate. Functionally, DNA-dependent RNA polymerase catalyzes the transcription of DNA into RNA using the four ribonucleoside triphosphates as substrates. This chain is DNA-directed RNA polymerase subunit beta'', found in Sinapis alba (White mustard).